Reading from the N-terminus, the 500-residue chain is Kynurenine 3-monooxygenase (500 aa).

Belongs to the aromatic-ring hydroxylase family. KMO subfamily. FAD serves as cofactor.

The protein resides in the mitochondrion outer membrane. It catalyses the reaction L-kynurenine + NADPH + O2 + H(+) = 3-hydroxy-L-kynurenine + NADP(+) + H2O. The protein operates within cofactor biosynthesis; NAD(+) biosynthesis; quinolinate from L-kynurenine: step 1/3. In terms of biological role, catalyzes the hydroxylation of L-kynurenine (L-Kyn) to form 3-hydroxy-L-kynurenine (L-3OHKyn). Required for synthesis of quinolinic acid. The protein is Kynurenine 3-monooxygenase (bna4) of Aspergillus terreus (strain NIH 2624 / FGSC A1156).